A 409-amino-acid chain; its full sequence is Probable beta-1,3-galactosyltransferase 3 (409 aa).

Residues 20-42 (WTFLLCFGSFCFGILFTDRMWII) traverse the membrane as a helical; Signal-anchor for type II membrane protein segment.

This sequence belongs to the glycosyltransferase 31 family. The cofactor is Mn(2+).

It localises to the golgi apparatus membrane. The protein operates within protein modification; protein glycosylation. Beta-1,3-galactosyltransferase that transfers galactose from UDP-galactose to substrates with a terminal glycosyl residue. In Arabidopsis thaliana (Mouse-ear cress), this protein is Probable beta-1,3-galactosyltransferase 3 (B3GALT3).